Reading from the N-terminus, the 461-residue chain is Argininosuccinate lyase (461 aa).

It belongs to the lyase 1 family. Argininosuccinate lyase subfamily.

The protein localises to the cytoplasm. It carries out the reaction 2-(N(omega)-L-arginino)succinate = fumarate + L-arginine. It functions in the pathway amino-acid biosynthesis; L-arginine biosynthesis; L-arginine from L-ornithine and carbamoyl phosphate: step 3/3. In Dehalococcoides mccartyi (strain ATCC BAA-2266 / KCTC 15142 / 195) (Dehalococcoides ethenogenes (strain 195)), this protein is Argininosuccinate lyase.